We begin with the raw amino-acid sequence, 615 residues long: Sodium-dependent neutral amino acid transporter B(0)AT3 (615 aa).

The Cytoplasmic portion of the chain corresponds to 1 to 26; the sequence is MAQASGMDPLVDIEDERPKWDNKLQY. The chain crosses the membrane as a helical span at residues 27-47; it reads LLSCIGFAVGLGNIWRFPYLC. At 48–52 the chain is on the extracellular side; it reads HTHGG. Residues 53-73 form a helical membrane-spanning segment; it reads GAFLIPYFIALVFEGIPLFYI. Topologically, residues 74–105 are cytoplasmic; that stretch reads ELAIGQRLRRGSIGVWKTISPYLGGVGLGCFS. A helical membrane pass occupies residues 106 to 126; it reads VSFLVSLYYNTILLWVLWFFL. Over 127-177 the chain is Extracellular; sequence NSFQHPLPWSTCPLDLNRTGFVQECQSSGTVSYFWYRQTLNITSDISNTGT. N-linked (GlcNAc...) asparagine glycosylation is found at N143 and N167. The helical transmembrane segment at 178 to 198 threads the bilayer; it reads IQWKLFLCLVACWTTVYLCVI. The Cytoplasmic segment spans residues 199–206; the sequence is RGIESTGK. A helical transmembrane segment spans residues 207–227; it reads VIYFTALFPYLVLTIFLIRGL. Topologically, residues 228 to 255 are extracellular; the sequence is TLPGATEGLTYLFTPNMKILQNSRVWLD. Residues 256-276 traverse the membrane as a helical segment; it reads AATQIFFSLSLAFGGHIAFAS. Residues 277–290 are Cytoplasmic-facing; sequence YNQPRNNCEKDAVT. The chain crosses the membrane as a helical span at residues 291–311; sequence IALVNSMTSLYASITIFSIMG. Residues 312 to 397 are Extracellular-facing; the sequence is FKASNDYGRC…FTEAVLHMPG (86 aa). N-linked (GlcNAc...) asparagine glycosylation is present at N353. The helical transmembrane segment at 398-418 threads the bilayer; the sequence is ASVWSVLFFGMLFTLGLSSMF. The Cytoplasmic portion of the chain corresponds to 419 to 442; the sequence is GNMEGVITPLFDMGILPKGVPKET. A helical membrane pass occupies residues 443–463; the sequence is MTGVVCFICFLSAICFTLQSG. Residues 464–472 lie on the Extracellular side of the membrane; that stretch reads SYWLEIFDS. The helical transmembrane segment at 473-493 threads the bilayer; sequence FAASLNLIIFAFMEVVGVIHV. The Cytoplasmic segment spans residues 494–520; it reads YGIKRFCDDIEWMTGRRPSLYWQVTWR. The chain crosses the membrane as a helical span at residues 521 to 541; sequence VVSPMLLFGIFLSYIVLLAQS. Over 542-571 the chain is Extracellular; that stretch reads SPSYKAWNPQYEHFPSREEKLYPGWVQVTC. A helical membrane pass occupies residues 572–592; sequence VLLSFLPSLWVPGIALAQLLF. The Cytoplasmic portion of the chain corresponds to 593–615; that stretch reads QYRQRWKNTHLESALKPQESRGC.

This sequence belongs to the sodium:neurotransmitter symporter (SNF) (TC 2.A.22) family. SLC6A18 subfamily. As to quaternary structure, interacts with CLTRN; this interaction regulates the trafficking of SLC6A18 to the cell membrane and its activity. Kidney-specific expression.

It localises to the apical cell membrane. Its subcellular location is the cell membrane. It carries out the reaction L-alanine(out) + chloride(out) + 2 Na(+)(out) = L-alanine(in) + chloride(in) + 2 Na(+)(in). The enzyme catalyses glycine(out) + chloride(out) + 2 Na(+)(out) = glycine(in) + chloride(in) + 2 Na(+)(in). The catalysed reaction is L-methionine(out) + chloride(out) + 2 Na(+)(out) = L-methionine(in) + chloride(in) + 2 Na(+)(in). It catalyses the reaction L-valine(out) + chloride(out) + 2 Na(+)(out) = L-valine(in) + chloride(in) + 2 Na(+)(in). It carries out the reaction L-isoleucine(out) + chloride(out) + 2 Na(+)(out) = L-isoleucine(in) + chloride(in) + 2 Na(+)(in). The enzyme catalyses L-serine(out) + chloride(out) + 2 Na(+)(out) = L-serine(in) + chloride(in) + 2 Na(+)(in). The catalysed reaction is L-leucine(out) + chloride(out) + 2 Na(+)(out) = L-leucine(in) + chloride(in) + 2 Na(+)(in). Symporter that transports one amino acid molecule together with two sodium and one chloride ions in kidneys and plays a role in the neutral amino acids reabsorption. Preferentially transports neutral amino acids such as L-glycine and L-alanine but also other neutral amino acids. Required CLTRN for cell surface expression and for its amino acid transporter activity. The transport mechanism is pH-independent. The polypeptide is Sodium-dependent neutral amino acid transporter B(0)AT3 (Rattus norvegicus (Rat)).